We begin with the raw amino-acid sequence, 122 residues long: Large ribosomal subunit protein uL14 (122 aa).

This sequence belongs to the universal ribosomal protein uL14 family. Part of the 50S ribosomal subunit. Forms a cluster with proteins L3 and L19. In the 70S ribosome, L14 and L19 interact and together make contacts with the 16S rRNA in bridges B5 and B8.

In terms of biological role, binds to 23S rRNA. Forms part of two intersubunit bridges in the 70S ribosome. This is Large ribosomal subunit protein uL14 from Finegoldia magna (strain ATCC 29328 / DSM 20472 / WAL 2508) (Peptostreptococcus magnus).